The chain runs to 367 residues: DNA replication and repair protein RecF (367 aa).

30-37 (GENAQGKT) contacts ATP.

The protein belongs to the RecF family.

Its subcellular location is the cytoplasm. Functionally, the RecF protein is involved in DNA metabolism; it is required for DNA replication and normal SOS inducibility. RecF binds preferentially to single-stranded, linear DNA. It also seems to bind ATP. This is DNA replication and repair protein RecF from Chlamydia caviae (strain ATCC VR-813 / DSM 19441 / 03DC25 / GPIC) (Chlamydophila caviae).